Reading from the N-terminus, the 103-residue chain is Large ribosomal subunit protein bL21 (103 aa).

The segment covering 83–92 (YRRKKGHRQP) has biased composition (basic residues). The segment at 83–103 (YRRKKGHRQPFSRVTVEKIEA) is disordered.

Belongs to the bacterial ribosomal protein bL21 family. In terms of assembly, part of the 50S ribosomal subunit. Contacts protein L20.

Functionally, this protein binds to 23S rRNA in the presence of protein L20. This is Large ribosomal subunit protein bL21 from Pelotomaculum thermopropionicum (strain DSM 13744 / JCM 10971 / SI).